We begin with the raw amino-acid sequence, 86 residues long: Large ribosomal subunit protein bL31m (86 aa).

The N-terminal 18 residues, 1–18, are a transit peptide targeting the mitochondrion; sequence MKCSLRLFEKAGRLSVRS.

This sequence belongs to the bacterial ribosomal protein bL31 family. Highly divergent. As to quaternary structure, component of the mitochondrial large ribosomal subunit (mt-LSU). Mature yeast 74S mitochondrial ribosomes consist of a small (37S) and a large (54S) subunit. The 37S small subunit contains a 15S ribosomal RNA (15S mt-rRNA) and at least 32 different proteins. The 54S large subunit contains a 21S rRNA (21S mt-rRNA) and at least 45 different proteins.

It localises to the mitochondrion. Functionally, component of the mitochondrial ribosome (mitoribosome), a dedicated translation machinery responsible for the synthesis of mitochondrial genome-encoded proteins, including at least some of the essential transmembrane subunits of the mitochondrial respiratory chain. The mitoribosomes are attached to the mitochondrial inner membrane and translation products are cotranslationally integrated into the membrane. This Schizosaccharomyces pombe (strain 972 / ATCC 24843) (Fission yeast) protein is Large ribosomal subunit protein bL31m (tam9).